The chain runs to 85 residues: Colicin-E8 immunity protein in ColE6 (85 aa).

Belongs to the colicins ColE2/ColE8/ColE9 and pyocins S1/S2 family.

The polypeptide is Colicin-E8 immunity protein in ColE6 (imm) (Escherichia coli).